Here is a 127-residue protein sequence, read N- to C-terminus: Large ribosomal subunit protein uL22 (127 aa).

The protein belongs to the universal ribosomal protein uL22 family. In terms of assembly, part of the 50S ribosomal subunit.

This protein binds specifically to 23S rRNA; its binding is stimulated by other ribosomal proteins, e.g. L4, L17, and L20. It is important during the early stages of 50S assembly. It makes multiple contacts with different domains of the 23S rRNA in the assembled 50S subunit and ribosome. Its function is as follows. The globular domain of the protein is located near the polypeptide exit tunnel on the outside of the subunit, while an extended beta-hairpin is found that lines the wall of the exit tunnel in the center of the 70S ribosome. In Methylorubrum populi (strain ATCC BAA-705 / NCIMB 13946 / BJ001) (Methylobacterium populi), this protein is Large ribosomal subunit protein uL22.